Consider the following 675-residue polypeptide: UvrABC system protein B (675 aa).

The region spanning 35 to 422 (EGVSDGLMFQ…ADNVVEQVVR (388 aa)) is the Helicase ATP-binding domain. Residue 48-55 (GVTGSGKT) coordinates ATP. A Beta-hairpin motif is present at residues 101 to 124 (YYDYYQPEAYVPTRDLFIEKDSSI). In terms of domain architecture, Helicase C-terminal spans 439 to 605 (QVDDLLGEIH…GVSKAVRELI (167 aa)). The 36-residue stretch at 633 to 668 (AREIRRLEKLMMDHARNLEFEQAAAARDALNALKSR) folds into the UVR domain.

The protein belongs to the UvrB family. In terms of assembly, forms a heterotetramer with UvrA during the search for lesions. Interacts with UvrC in an incision complex.

The protein resides in the cytoplasm. Functionally, the UvrABC repair system catalyzes the recognition and processing of DNA lesions. A damage recognition complex composed of 2 UvrA and 2 UvrB subunits scans DNA for abnormalities. Upon binding of the UvrA(2)B(2) complex to a putative damaged site, the DNA wraps around one UvrB monomer. DNA wrap is dependent on ATP binding by UvrB and probably causes local melting of the DNA helix, facilitating insertion of UvrB beta-hairpin between the DNA strands. Then UvrB probes one DNA strand for the presence of a lesion. If a lesion is found the UvrA subunits dissociate and the UvrB-DNA preincision complex is formed. This complex is subsequently bound by UvrC and the second UvrB is released. If no lesion is found, the DNA wraps around the other UvrB subunit that will check the other stand for damage. The protein is UvrABC system protein B of Bordetella bronchiseptica (strain ATCC BAA-588 / NCTC 13252 / RB50) (Alcaligenes bronchisepticus).